The sequence spans 188 residues: Elongation factor P (188 aa).

This sequence belongs to the elongation factor P family.

It localises to the cytoplasm. It functions in the pathway protein biosynthesis; polypeptide chain elongation. Its function is as follows. Involved in peptide bond synthesis. Stimulates efficient translation and peptide-bond synthesis on native or reconstituted 70S ribosomes in vitro. Probably functions indirectly by altering the affinity of the ribosome for aminoacyl-tRNA, thus increasing their reactivity as acceptors for peptidyl transferase. This chain is Elongation factor P, found in Nitrosospira multiformis (strain ATCC 25196 / NCIMB 11849 / C 71).